Reading from the N-terminus, the 379-residue chain is Cobalt-precorrin-5B C(1)-methyltransferase (379 aa).

This sequence belongs to the CbiD family.

It carries out the reaction Co-precorrin-5B + S-adenosyl-L-methionine = Co-precorrin-6A + S-adenosyl-L-homocysteine. Its pathway is cofactor biosynthesis; adenosylcobalamin biosynthesis; cob(II)yrinate a,c-diamide from sirohydrochlorin (anaerobic route): step 6/10. In terms of biological role, catalyzes the methylation of C-1 in cobalt-precorrin-5B to form cobalt-precorrin-6A. The polypeptide is Cobalt-precorrin-5B C(1)-methyltransferase (Salmonella typhimurium (strain LT2 / SGSC1412 / ATCC 700720)).